The sequence spans 179 residues: Large ribosomal subunit protein uL6 (179 aa).

This sequence belongs to the universal ribosomal protein uL6 family. In terms of assembly, part of the 50S ribosomal subunit.

Its function is as follows. This protein binds to the 23S rRNA, and is important in its secondary structure. It is located near the subunit interface in the base of the L7/L12 stalk, and near the tRNA binding site of the peptidyltransferase center. This Gemmatimonas aurantiaca (strain DSM 14586 / JCM 11422 / NBRC 100505 / T-27) protein is Large ribosomal subunit protein uL6.